A 568-amino-acid chain; its full sequence is Type 3 secretion system secretin (568 aa).

The first 15 residues, 1–15 (MAAALLLWTAGTVCA), serve as a signal peptide directing secretion. Positions 203 to 292 (YGGDGPSDSG…RGSTPIIRAD (90 aa)) are disordered. Residues 243–257 (LGGGKSPLPPGGTGQ) show a composition bias toward gly residues. Over residues 273–284 (NRLRSDELDDRG) the composition is skewed to basic and acidic residues.

Belongs to the bacterial secretin family. T3SS SctC subfamily. As to quaternary structure, the core secretion machinery of the T3SS is composed of approximately 20 different proteins, including cytoplasmic components, a base, an export apparatus and a needle. This subunit is part of the base, which anchors the injectisome in the bacterial cell envelope. Forms a stable homooligomeric complex.

It localises to the cell outer membrane. Component of the type III secretion system (T3SS), also called injectisome, which is used to inject bacterial effector proteins into eukaryotic host cells. Forms a ring-shaped multimeric structure with an apparent central pore in the outer membrane. This chain is Type 3 secretion system secretin, found in Ralstonia nicotianae (strain ATCC BAA-1114 / GMI1000) (Ralstonia solanacearum).